Here is a 1171-residue protein sequence, read N- to C-terminus: Putative tricorn protease homolog 2 (1171 aa).

The tract at residues 432 to 498 (AGYPPDAGDE…GSPGTPATAG (67 aa)) is disordered. Low complexity-rich tracts occupy residues 444 to 456 (AGTAARADSAPDA) and 466 to 498 (IAAGTGTGDIADADAAAGGTVTPGSPGTPATAG). The Charge relay system role is filled by histidine 827. The tract at residues 842–941 (YQRWQGLLGA…RVAVVPLVDE (100 aa)) is PDZ-like. 1002-1004 (AGG) contributes to the substrate binding site. The active-site Nucleophile is serine 1051. Residue 1079 to 1081 (GMT) participates in substrate binding. Glutamate 1109 serves as the catalytic Charge relay system. The interval 1149–1171 (PPATPPGYEAVPDRSRPPLPPRE) is disordered. Over residues 1159 to 1171 (VPDRSRPPLPPRE) the composition is skewed to basic and acidic residues.

Belongs to the peptidase S41B family.

It is found in the cytoplasm. Its function is as follows. Degrades oligopeptides in a sequential manner. In Streptomyces coelicolor (strain ATCC BAA-471 / A3(2) / M145), this protein is Putative tricorn protease homolog 2 (tri2).